Here is a 402-residue protein sequence, read N- to C-terminus: Flavohemoprotein (402 aa).

The Globin domain occupies 1 to 136; the sequence is MLSAKTIEIV…IADAFISIEA (136 aa). Residue His-85 participates in heme b binding. Residues Tyr-95 and Glu-135 each act as charge relay system in the active site. The tract at residues 147-402 is reductase; it reads GGWKDFRNFV…EFFGPATSLQ (256 aa). In terms of domain architecture, FAD-binding FR-type spans 150-260; that stretch reads KDFRNFVIVK…SAPAGDFVLN (111 aa). FAD contacts are provided by residues Tyr-188 and 204–207; that span reads RQYS. 273-278 provides a ligand contact to NADP(+); it reads GVGITP. 394 to 397 contacts FAD; the sequence is FFGP.

Belongs to the globin family. Two-domain flavohemoproteins subfamily. It in the C-terminal section; belongs to the flavoprotein pyridine nucleotide cytochrome reductase family. Heme b serves as cofactor. Requires FAD as cofactor.

It carries out the reaction 2 nitric oxide + NADPH + 2 O2 = 2 nitrate + NADP(+) + H(+). The enzyme catalyses 2 nitric oxide + NADH + 2 O2 = 2 nitrate + NAD(+) + H(+). Is involved in NO detoxification in an aerobic process, termed nitric oxide dioxygenase (NOD) reaction that utilizes O(2) and NAD(P)H to convert NO to nitrate, which protects the bacterium from various noxious nitrogen compounds. Therefore, plays a central role in the inducible response to nitrosative stress. The sequence is that of Flavohemoprotein from Bacillus cereus (strain ATCC 14579 / DSM 31 / CCUG 7414 / JCM 2152 / NBRC 15305 / NCIMB 9373 / NCTC 2599 / NRRL B-3711).